Consider the following 152-residue polypeptide: Ribosome maturation factor RimP (152 aa).

This sequence belongs to the RimP family.

Its subcellular location is the cytoplasm. Its function is as follows. Required for maturation of 30S ribosomal subunits. This Aeromonas salmonicida (strain A449) protein is Ribosome maturation factor RimP.